The primary structure comprises 749 residues: Dynamin-1-like protein (749 aa).

Met-1 carries the N-acetylmethionine modification. Positions 22 to 315 constitute a Dynamin-type G domain; it reads IIQLPQIVVV…LMHHIRDCLP (294 aa). The interval 32 to 39 is G1 motif; it reads GTQSSGKS. Residue 32–40 participates in GTP binding; it reads GTQSSGKSS. Residues 58–60 are G2 motif; the sequence is VTR. The interval 74 to 93 is disordered; the sequence is DKRKTTGEENDPATWKNSRH. The G3 motif stretch occupies residues 159 to 162; sequence DLPG. Residues 228 to 231 form a G4 motif region; that stretch reads TKLD. Residues 228 to 234 and 259 to 262 contribute to the GTP site; these read TKLDLMD and NRSQ. Positions 258-261 are G5 motif; that stretch reads VNRS. A middle domain region spans residues 357–502; the sequence is YCNTIEGTAK…NEMVHNLVAI (146 aa). Residues 461-698 form an interaction with GSK3B region; sequence NYSTQELLRF…NHVKDTLQSE (238 aa). The interval 515 to 582 is b domain; it reads ADACGLMNNN…IQESRRETKN (68 aa). Residues 536–604 form a disordered region; sequence ELPSAVSRDK…QEPTTGNWRG (69 aa). Position 542 is a phosphoserine (Ser-542). Glycyl lysine isopeptide (Lys-Gly) (interchain with G-Cter in SUMO) cross-links involve residues Lys-545 and Lys-548. A compositionally biased stretch (low complexity) spans 550–567; it reads PSALAPASQEPSPAASAE. Phosphoserine is present on Ser-561. The segment covering 568–581 has biased composition (basic and acidic residues); sequence ADGKLIQESRRETK. Glycyl lysine isopeptide (Lys-Gly) (interchain with G-Cter in SUMO) cross-links involve residues Lys-571 and Lys-581. O-linked (GlcNAc) threonine glycosylation is found at Thr-598 and Thr-599. Lys-607 is covalently cross-linked (Glycyl lysine isopeptide (Lys-Gly) (interchain with G-Cter in SUMO)). Position 610 is an N6-acetyllysine; alternate (Lys-610). Lys-610 is covalently cross-linked (Glycyl lysine isopeptide (Lys-Gly) (interchain with G-Cter in SUMO); alternate). Lys-619 participates in a covalent cross-link: Glycyl lysine isopeptide (Lys-Gly) (interchain with G-Cter in SUMO). Residue Ser-620 is modified to Phosphoserine. Lys-621 participates in a covalent cross-link: Glycyl lysine isopeptide (Lys-Gly) (interchain with G-Cter in SUMO). Ser-629 carries the post-translational modification Phosphoserine; by CDK1 and PINK1. Residue Ser-650 is modified to Phosphoserine; by CAMK1 and PKA. At Cys-657 the chain carries S-nitrosocysteine. The GED domain maps to 657–748; that stretch reads CEVIERLIKS…IIAEIRETHL (92 aa). Positions 667 to 681 are important for homodimerization; it reads YFLIVRKNIQDSVPK.

The protein belongs to the TRAFAC class dynamin-like GTPase superfamily. Dynamin/Fzo/YdjA family. In terms of assembly, homotetramer; dimerizes through the N-terminal GTP-middle region of one molecule binding to the GED domain of another DNM1L molecule. Oligomerizes in a GTP-dependent manner to form membrane-associated tubules with a spiral pattern. Interacts with GSK3B and MARCHF5. Interacts (via the GTPase and B domains) with UBE2I; the interaction promotes sumoylation of DNM1L, mainly in its B domain. Interacts with PPP3CA; the interaction dephosphorylates DNM1L and regulates its transition to mitochondria. Interacts with BCL2L1 isoform BCL-X(L) and CLTA; DNM1L and BCL2L1 isoform BCL-X(L) may form a complex in synaptic vesicles that also contains clathrin and MFF. Interacts with MFF; the interaction is inhinited by C11orf65/MFI. Interacts with FIS1. Interacts with MIEF2 and MIEF1; GTP-dependent, regulates GTP hydrolysis and DNM1L oligomerization. Interacts with PGAM5; this interaction leads to dephosphorylation at Ser-656 and activation of GTPase activity and eventually to mitochondria fragmentation. Interacts with RALBP1; during mitosis, recruits DNM1L to the mitochondrion and mediates its activation by the mitotic kinase cyclin B-CDK1. Phosphorylation/dephosphorylation events on two sites near the GED domain regulate mitochondrial fission. Phosphorylation on Ser-650 by CAMK1 and PKA inhibits the GTPase activity, leading to a defect in mitochondrial fission promoting mitochondrial elongation. Dephosphorylated on this site by PPP3CA which promotes mitochondrial fission. Phosphorylation on Ser-629 by CDK1 and PINK1 activates the GTPase activity and promotes mitochondrial fission. Phosphorylated in a circadian manner at Ser-650. In terms of processing, sumoylated on various lysine residues within the B domain, probably by MUL1. Sumoylation positively regulates mitochondrial fission. Desumoylated by SENP5 during G2/M transition of mitosis. Appears to be linked to its catalytic activity. Post-translationally, S-nitrosylation increases DNM1L dimerization, mitochondrial fission and causes neuronal damage. O-GlcNAcylation augments the level of the GTP-bound active form of DNM1L and induces translocation from the cytoplasm to mitochondria in cardiomyocytes. It also decreases phosphorylation at Ser-650. In terms of processing, ubiquitination by MARCHF5 affects mitochondrial morphology.

It localises to the cytoplasm. The protein localises to the cytosol. Its subcellular location is the golgi apparatus. It is found in the endomembrane system. The protein resides in the mitochondrion outer membrane. It localises to the peroxisome. The protein localises to the membrane. Its subcellular location is the clathrin-coated pit. It is found in the cytoplasmic vesicle. The protein resides in the secretory vesicle. It localises to the synaptic vesicle membrane. The enzyme catalyses GTP + H2O = GDP + phosphate + H(+). Its function is as follows. Functions in mitochondrial and peroxisomal division. Mediates membrane fission through oligomerization into membrane-associated tubular structures that wrap around the scission site to constrict and sever the mitochondrial membrane through a GTP hydrolysis-dependent mechanism. The specific recruitment at scission sites is mediated by membrane receptors like MFF, MIEF1 and MIEF2 for mitochondrial membranes. While the recruitment by the membrane receptors is GTP-dependent, the following hydrolysis of GTP induces the dissociation from the receptors and allows DNM1L filaments to curl into closed rings that are probably sufficient to sever a double membrane. Acts downstream of PINK1 to promote mitochondrial fission in a PRKN-dependent manner. Plays an important role in mitochondrial fission during mitosis. Through its function in mitochondrial division, ensures the survival of at least some types of postmitotic neurons, including Purkinje cells, by suppressing oxidative damage. Required for normal brain development, including that of cerebellum. Facilitates developmentally regulated apoptosis during neural tube formation. Required for a normal rate of cytochrome c release and caspase activation during apoptosis; this requirement may depend upon the cell type and the physiological apoptotic cues. Required for formation of endocytic vesicles. Proposed to regulate synaptic vesicle membrane dynamics through association with BCL2L1 isoform Bcl-X(L) which stimulates its GTPase activity in synaptic vesicles; the function may require its recruitment by MFF to clathrin-containing vesicles. Required for programmed necrosis execution. Rhythmic control of its activity following phosphorylation at Ser-650 is essential for the circadian control of mitochondrial ATP production. This Bos taurus (Bovine) protein is Dynamin-1-like protein.